We begin with the raw amino-acid sequence, 43 residues long: Seed non-specific lipid transfer protein-like (43 aa).

The protein belongs to the plant LTP family. As to quaternary structure, homodimer.

In terms of biological role, plant non-specific lipid-transfer proteins transfer phospholipids as well as galactolipids across membranes. May play a role in wax or cutin deposition in the cell walls of expanding epidermal cells and certain secretory tissues. This isoform inhibits the hyphal growth of several fungi in vitro. The chain is Seed non-specific lipid transfer protein-like from Raphanus sativus (Radish).